We begin with the raw amino-acid sequence, 952 residues long: Leucine--tRNA ligase (952 aa).

The 'HIGH' region motif lies at 66 to 77 (PYPSGAGLHVGH). Positions 722 to 726 (KMGKS) match the 'KMSKS' region motif. Residue lysine 725 coordinates ATP.

Belongs to the class-I aminoacyl-tRNA synthetase family.

It localises to the cytoplasm. The enzyme catalyses tRNA(Leu) + L-leucine + ATP = L-leucyl-tRNA(Leu) + AMP + diphosphate. The chain is Leucine--tRNA ligase from Corynebacterium glutamicum (strain ATCC 13032 / DSM 20300 / JCM 1318 / BCRC 11384 / CCUG 27702 / LMG 3730 / NBRC 12168 / NCIMB 10025 / NRRL B-2784 / 534).